We begin with the raw amino-acid sequence, 147 residues long: ATP synthase subunit 9, mitochondrial (147 aa).

A mitochondrion-targeting transit peptide spans 1 to 66 (MASTRVLASR…TTRQAFQKRA (66 aa)). Helical transmembrane passes span 86-106 (SAAIGLTGAGIGIGLVFAALL) and 123-143 (AILGFAFVEAIGLFDLMVALM).

This sequence belongs to the ATPase C chain family. As to quaternary structure, F-type ATPases have 2 components, CF(1) - the catalytic core - and CF(0) - the membrane proton channel. CF(1) has five subunits: alpha(3), beta(3), gamma(1), delta(1), epsilon(1). CF(0) has three main subunits: a, b and c.

It is found in the mitochondrion membrane. Functionally, mitochondrial membrane ATP synthase (F(1)F(0) ATP synthase or Complex V) produces ATP from ADP in the presence of a proton gradient across the membrane which is generated by electron transport complexes of the respiratory chain. F-type ATPases consist of two structural domains, F(1) - containing the extramembraneous catalytic core and F(0) - containing the membrane proton channel, linked together by a central stalk and a peripheral stalk. During catalysis, ATP synthesis in the catalytic domain of F(1) is coupled via a rotary mechanism of the central stalk subunits to proton translocation. Part of the complex F(0) domain. A homomeric c-ring of probably 10 subunits is part of the complex rotary element. The polypeptide is ATP synthase subunit 9, mitochondrial (oli) (Neurospora crassa (strain ATCC 24698 / 74-OR23-1A / CBS 708.71 / DSM 1257 / FGSC 987)).